Reading from the N-terminus, the 658-residue chain is Scarecrow-like protein 28 (658 aa).

Disordered regions lie at residues 43-85 (PCSS…TSGC), 96-115 (LATTRGNGEGFSWNNDNNNR), and 209-265 (PAAV…NNNR). Over residues 214–228 (EASGGSSTSASSESR) the composition is skewed to low complexity. The GRAS domain occupies 265 to 654 (RNDLQRDFEL…QPLYTISAWT (390 aa)). The interval 272-336 (FELVNLLTGC…VARMWPHIFH (65 aa)) is leucine repeat I (LRI). The interval 355–420 (LRFLNQVTPI…NPPHHVRITG (66 aa)) is VHIID. The short motif at 386–390 (VHIID) is the VHIID element. Positions 430-462 (ETGDRLHGFAEAMNLQFEFHPVVDRLEDVRLWM) are leucine repeat II (LRII). The segment at 471–563 (VAVNCVMQMH…EMLFGREIRN (93 aa)) is PFYRE. The SAW stretch occupies residues 566–654 (ACEGSHRQER…QPLYTISAWT (89 aa)).

Belongs to the GRAS family. In terms of assembly, interacts with SNRNP35 and CYP95. As to expression, expressed in roots and sepals.

It localises to the nucleus. Functionally, probable transcription factor involved in plant development. In Arabidopsis thaliana (Mouse-ear cress), this protein is Scarecrow-like protein 28 (SCL28).